A 69-amino-acid polypeptide reads, in one-letter code: Sec-independent protein translocase protein TatA (69 aa).

A helical transmembrane segment spans residues 1 to 21 (MFGLGGQELILILLIILLLFG).

Belongs to the TatA/E family. Forms a complex with TatC.

Its subcellular location is the cell inner membrane. In terms of biological role, part of the twin-arginine translocation (Tat) system that transports large folded proteins containing a characteristic twin-arginine motif in their signal peptide across membranes. TatA could form the protein-conducting channel of the Tat system. The polypeptide is Sec-independent protein translocase protein TatA (Pelodictyon phaeoclathratiforme (strain DSM 5477 / BU-1)).